The sequence spans 546 residues: Phosphoglucomutase (546 aa).

Serine 135 acts as the Phosphoserine intermediate in catalysis. Mg(2+) contacts are provided by serine 135, aspartate 288, aspartate 290, and aspartate 292.

It belongs to the phosphohexose mutase family. The cofactor is Mg(2+).

The catalysed reaction is alpha-D-glucose 1-phosphate = alpha-D-glucose 6-phosphate. It functions in the pathway glycolipid metabolism; diglucosyl-diacylglycerol biosynthesis. In terms of biological role, catalyzes the interconversion between glucose-6-phosphate and alpha-glucose-1-phosphate. This is the first step in the biosynthesis of diglucosyl-diacylglycerol (Glc2-DAG), i.e. a glycolipid found in the membrane, which is also used as a membrane anchor for lipoteichoic acid (LTA). This Staphylococcus epidermidis (strain ATCC 35984 / DSM 28319 / BCRC 17069 / CCUG 31568 / BM 3577 / RP62A) protein is Phosphoglucomutase (pgcA).